Reading from the N-terminus, the 254-residue chain is Leucyl/phenylalanyl-tRNA--protein transferase (254 aa).

Belongs to the L/F-transferase family.

The protein resides in the cytoplasm. The catalysed reaction is N-terminal L-lysyl-[protein] + L-leucyl-tRNA(Leu) = N-terminal L-leucyl-L-lysyl-[protein] + tRNA(Leu) + H(+). The enzyme catalyses N-terminal L-arginyl-[protein] + L-leucyl-tRNA(Leu) = N-terminal L-leucyl-L-arginyl-[protein] + tRNA(Leu) + H(+). It carries out the reaction L-phenylalanyl-tRNA(Phe) + an N-terminal L-alpha-aminoacyl-[protein] = an N-terminal L-phenylalanyl-L-alpha-aminoacyl-[protein] + tRNA(Phe). In terms of biological role, functions in the N-end rule pathway of protein degradation where it conjugates Leu, Phe and, less efficiently, Met from aminoacyl-tRNAs to the N-termini of proteins containing an N-terminal arginine or lysine. The chain is Leucyl/phenylalanyl-tRNA--protein transferase from Burkholderia multivorans (strain ATCC 17616 / 249).